We begin with the raw amino-acid sequence, 338 residues long: MSSDGNVTGGGGANTVGVTNKPFFCYQCNRTVNVTISPPSSDPTCPICNEGFLEEYDNPNPNQGSGFLNPNPNSIPFHDLFLTLSDPFASLLPLLFPSSSSTTTSSSASIDPNNPSLSGPTRSGRGDPFAFDPFTFIQNHLNDLRSSGAQIEFVIQNNPSDQGFRLPANIGDYFIGPGLEQLIQQLAENDPNRYGTPPASKSAIEALPLVNITKSNLNSEFNQCAVCMDDFEEGTEAKQMPCKHLYHKDCLLPWLELHNSCPVCRHELPTDDPDYERRVRGAQGTSGGNDGDNSGQRSDGDNRTVERSFRISLPWPFQARGPGPAPGDNAETRQEDLD.

The segment at 102 to 124 (TTTSSSASIDPNNPSLSGPTRSG) is disordered. Polar residues predominate over residues 110–121 (IDPNNPSLSGPT). The RING-type; atypical zinc-finger motif lies at 224–265 (CAVCMDDFEEGTEAKQMPCKHLYHKDCLLPWLELHNSCPVCR). 2 stretches are compositionally biased toward basic and acidic residues: residues 267 to 279 (ELPT…ERRV) and 298 to 309 (SDGDNRTVERSF). Residues 267–338 (ELPTDDPDYE…NAETRQEDLD (72 aa)) are disordered.

Auto-ubiquitinated as part of the enzymatic reaction. Mostly expressed in cotton fibers, and, to a lower extent, in leaves and flowers.

The enzyme catalyses S-ubiquitinyl-[E2 ubiquitin-conjugating enzyme]-L-cysteine + [acceptor protein]-L-lysine = [E2 ubiquitin-conjugating enzyme]-L-cysteine + N(6)-ubiquitinyl-[acceptor protein]-L-lysine.. The protein operates within protein modification; protein ubiquitination. E3 ubiquitin-protein ligase which accepts ubiquitin from an E2 ubiquitin-conjugating enzyme in the form of a thioester and then directly transfers the ubiquitin to targeted substrates. Promotes polyubiquitination of target proteins. This Gossypium hirsutum (Upland cotton) protein is E3 ubiquitin-protein ligase RING1 (RING1).